A 271-amino-acid polypeptide reads, in one-letter code: MSRVGLLVLGPAGAGKSTFCNSIISHMQTIGRRAHIVNLDPAAEPSKYEFTIDIRDLISLDDVMEELDLGPNGALIYCFEYLMKNLDWLDEEIGDYNDEYLIFDCPGQIELYTHIPVLPNIVRHLQGQLNFNLCATYLLEAPFVIDSSKFFSGALSAMSAMILLELPHINVLSKLDMIKDEYGKKKLKRFLNPDAMLLANEADQNLNPKFHHLNQCIANLVDDFGMVQFLPLEANNPESVATILSYVDDVTQWAEAQEQKEPKDQIDIEDL.

Residue 13–18 participates in GTP binding; sequence GAGKST. A Gly-Pro-Asn (GPN)-loop; involved in dimer interface motif is present at residues 70–72; it reads GPN. GTP is bound at residue 173–176; sequence SKLD.

This sequence belongs to the GPN-loop GTPase family. In terms of assembly, heterodimers with GPN1 or GPN2. Binds to RNA polymerase II (RNAPII).

Functionally, small GTPase required for proper nuclear import of RNA polymerase II and III (RNAPII and RNAPIII). May act at an RNAP assembly step prior to nuclear import. The polypeptide is GPN-loop GTPase 3 (Candida glabrata (strain ATCC 2001 / BCRC 20586 / JCM 3761 / NBRC 0622 / NRRL Y-65 / CBS 138) (Yeast)).